A 195-amino-acid chain; its full sequence is ATP-dependent Clp protease proteolytic subunit (195 aa).

The active-site Nucleophile is the S97. Residue H122 is part of the active site.

Belongs to the peptidase S14 family. In terms of assembly, fourteen ClpP subunits assemble into 2 heptameric rings which stack back to back to give a disk-like structure with a central cavity, resembling the structure of eukaryotic proteasomes.

It is found in the cytoplasm. It catalyses the reaction Hydrolysis of proteins to small peptides in the presence of ATP and magnesium. alpha-casein is the usual test substrate. In the absence of ATP, only oligopeptides shorter than five residues are hydrolyzed (such as succinyl-Leu-Tyr-|-NHMec, and Leu-Tyr-Leu-|-Tyr-Trp, in which cleavage of the -Tyr-|-Leu- and -Tyr-|-Trp bonds also occurs).. Its function is as follows. Cleaves peptides in various proteins in a process that requires ATP hydrolysis. Has a chymotrypsin-like activity. Plays a major role in the degradation of misfolded proteins. The protein is ATP-dependent Clp protease proteolytic subunit of Lactobacillus acidophilus (strain ATCC 700396 / NCK56 / N2 / NCFM).